The chain runs to 334 residues: Phosphate acyltransferase (334 aa).

Belongs to the PlsX family. Homodimer. Probably interacts with PlsY.

It localises to the cytoplasm. The enzyme catalyses a fatty acyl-[ACP] + phosphate = an acyl phosphate + holo-[ACP]. Its pathway is lipid metabolism; phospholipid metabolism. Functionally, catalyzes the reversible formation of acyl-phosphate (acyl-PO(4)) from acyl-[acyl-carrier-protein] (acyl-ACP). This enzyme utilizes acyl-ACP as fatty acyl donor, but not acyl-CoA. This Mycoplasma capricolum subsp. capricolum (strain California kid / ATCC 27343 / NCTC 10154) protein is Phosphate acyltransferase.